Consider the following 430-residue polypeptide: Adenylosuccinate synthetase (430 aa).

GTP is bound by residues 13 to 19 (GDEGKGK) and 41 to 43 (GHT). The Proton acceptor role is filled by aspartate 14. Mg(2+) is bound by residues aspartate 14 and glycine 41. IMP-binding positions include 14 to 17 (DEGK), 39 to 42 (NAGH), threonine 130, arginine 144, glutamine 225, threonine 240, and arginine 304. Histidine 42 serves as the catalytic Proton donor. 300–306 (ATTGRAR) serves as a coordination point for substrate. Residues arginine 306, 332 to 334 (KLD), and 414 to 416 (STG) contribute to the GTP site.

The protein belongs to the adenylosuccinate synthetase family. Homodimer. Mg(2+) serves as cofactor.

It is found in the cytoplasm. The enzyme catalyses IMP + L-aspartate + GTP = N(6)-(1,2-dicarboxyethyl)-AMP + GDP + phosphate + 2 H(+). The protein operates within purine metabolism; AMP biosynthesis via de novo pathway; AMP from IMP: step 1/2. Its function is as follows. Plays an important role in the de novo pathway of purine nucleotide biosynthesis. Catalyzes the first committed step in the biosynthesis of AMP from IMP. This Pseudomonas syringae pv. tomato (strain ATCC BAA-871 / DC3000) protein is Adenylosuccinate synthetase.